A 69-amino-acid chain; its full sequence is Pantinin-1 (69 aa).

An N-terminal signal peptide occupies residues 1–23 (MKTQFVILMITVILMQMLVQTEG). Position 37 is a valine amide (Val-37). Positions 41 to 69 (GLNDRDQLDDLFDSDLSDADIKLLKEMFK) are excised as a propeptide.

Belongs to the non-disulfide-bridged peptide (NDBP) superfamily. Short antimicrobial peptide (group 4) family. In terms of tissue distribution, expressed by the venom gland.

It is found in the secreted. The protein localises to the target cell membrane. Functionally, amphipathic peptide that possesses relatively strong activities against Gram-positive bacteria and a fungus, but has very weak antimicrobial activities against Gram-negative bacteria. Also exhibits very low hemolytic activities against human erythrocytes (64 uM induce 21% of hemolysis). Minimal inhibitory concentration (MIC) are the following: 8 uM against S.aureus, 32 uM against B.magaterium, 32 uM against M.luteus, 28 uM against vancomycin-resistant Enterococci, 14 uM against methicillin-resistant S.aureus, 62 uM against E.coli, &gt;87 uM against P.putida, &gt;87 uM against K.oxytoca, 76 uM against E.cloacae, 72 uM against S.enterica and 16 uM against the fungus C.tropicalis. The polypeptide is Pantinin-1 (Pandinus imperator (Emperor scorpion)).